Here is a 248-residue protein sequence, read N- to C-terminus: Sperm-specific protein Don juan (248 aa).

Residues 82–147 adopt a coiled-coil conformation; that stretch reads KEGNQDELEN…EKKTKCAKKD (66 aa). Residues 146 to 200 form a disordered region; that stretch reads KDPCKKKDPCKKKDPCKKKDPCKKKDPCKKKDPCKKKDPCKKKDPCKKKGGDLKK. 8 repeat units span residues 147-152, 153-158, 159-164, 165-170, 171-176, 177-182, 183-188, and 189-194. Positions 147-194 are 8 X 6 AA tandem repeat of D-P-C-K-K-K; sequence DPCKKKDPCKKKDPCKKKDPCKKKDPCKKKDPCKKKDPCKKKDPCKKK. A coiled-coil region spans residues 197–244; sequence DLKKKCKKLAEKEKCKKLAKKEKMKKLQKKCKKMAQKEKCKKMAKKDK.

As to expression, expression limited to post-meiotic male germ cells. Expressed in elongated spermatids during individualization and in finally elongated nuclei of spermatids. After completion of nuclear shaping it is no longer expressed in the sperm heads with the onset of individualization.

The protein resides in the nucleus. It is found in the mitochondrion. In terms of biological role, may be involved in the final steps of mitochondrial differentiation within the flagellum. The sequence is that of Sperm-specific protein Don juan (dj) from Drosophila melanogaster (Fruit fly).